Here is a 372-residue protein sequence, read N- to C-terminus: Cytochrome b (372 aa).

Helical transmembrane passes span 25–45 (FGSM…FLAI), 69–90 (WTMQ…YIHI), 105–125 (WLSG…GYVL), and 170–190 (FFAL…IHII). Heme b contacts are provided by histidine 75 and histidine 89. Positions 174 and 188 each coordinate heme b. Histidine 193 provides a ligand contact to a ubiquinone. Transmembrane regions (helical) follow at residues 218 to 238 (YKDI…MAFA), 280 to 300 (LGGT…PFTH), 312 to 332 (LAQM…WTAT), and 339 to 358 (FILI…IINP).

The protein belongs to the cytochrome b family. In terms of assembly, the cytochrome bc1 complex contains 3 respiratory subunits (MT-CYB, CYC1 and UQCRFS1), 2 core proteins (UQCRC1 and UQCRC2) and probably 6 low-molecular weight proteins. Requires heme b as cofactor.

It localises to the mitochondrion inner membrane. In terms of biological role, component of the ubiquinol-cytochrome c reductase complex (complex III or cytochrome b-c1 complex) that is part of the mitochondrial respiratory chain. The b-c1 complex mediates electron transfer from ubiquinol to cytochrome c. Contributes to the generation of a proton gradient across the mitochondrial membrane that is then used for ATP synthesis. In Acanthophis antarcticus (Common death adder), this protein is Cytochrome b (MT-CYB).